Here is a 561-residue protein sequence, read N- to C-terminus: Delta(24)-sterol reductase (561 aa).

At Met1–Arg25 the chain is on the lumenal side. At Ser2 the chain carries Phosphoserine. A helical; Signal-anchor transmembrane segment spans residues Trp26–Leu46. Residues Gly47–Asp561 lie on the Cytoplasmic side of the membrane. One can recognise an FAD-binding PCMH-type domain in the interval Met49–Val232. The interaction with calmodulin stretch occupies residues Cys518–Arg539.

Belongs to the DIMINUTO family. Interacts with calmodulin.

Its subcellular location is the microsome membrane. It catalyses the reaction lathosterol + NADP(+) = 5alpha-cholesta-7,24-dien-3beta-ol + NADPH + H(+). In terms of biological role, plays a critical role in the general process of plant cell elongation. Involved in the synthesis of campesterol, an early precursor of brassinolide. Required for the conversion of 24-methylenecholesterol to campesterol and for the conversion of isofucosterol to sitosterol. Necessary for both the isomerization and reduction of 24-methylenecholesterol. Regulates indirectly phytochrome-mediated light responses through the modulation of brassinosteroid biosynthesis. The chain is Delta(24)-sterol reductase (DIM) from Arabidopsis thaliana (Mouse-ear cress).